The following is a 659-amino-acid chain: Interferon-induced GTP-binding protein Mx1 (659 aa).

M1 carries the N-acetylmethionine modification. Residues 1–40 form a disordered region; the sequence is MVNSKGEITDSDPGSNHLLLNGLPDKAGKNQDTEPENSLC. Residues 65 to 338 enclose the Dynamin-type G domain; that stretch reads DLALPAIAVI…LITHICKTLP (274 aa). The segment at 75–82 is G1 motif; it reads GDQSSGKS. 75-82 is a binding site for GTP; the sequence is GDQSSGKS. The segment at 100–102 is G2 motif; that stretch reads VTR. Residues 176 to 179 form a G3 motif region; it reads DLPG. GTP is bound by residues 176-180 and 245-248; these read DLPGI and TKPD. Positions 245–248 are G4 motif; it reads TKPD. Residues 277–280 are G5 motif; that stretch reads KCRG. Positions 339–364 are bundle signaling element (BSE); it reads LLENQIKENHEKITEELKKYGSDVPE. The tract at residues 364–531 is middle domain; the sequence is EEEHEKMFFL…HFQMEQIVYC (168 aa). A stalk region spans residues 365–629; it reads EEHEKMFFLI…KDTYNWLLKE (265 aa). The tract at residues 552-555 is critical for lipid-binding; the sequence is KNKK. One can recognise a GED domain in the interval 571–659; sequence LSEIFEHLLA…ARRRLAKFPG (89 aa).

Belongs to the TRAFAC class dynamin-like GTPase superfamily. Dynamin/Fzo/YdjA family. In terms of assembly, homooligomer. Oligomerizes into multimeric filamentous or ring-like structures by virtue of its stalk domain. Oligomerization is critical for GTPase activity, protein stability, and recognition of viral target structures. Interacts with TRPC1, TRPC3, TRPC4, TRPC5, TRPC6 and TRPC7. Interacts with HSPA5. Interacts with TUBB/TUBB5. Interacts with DDX39A and DDX39B. In terms of processing, ISGylated.

It localises to the cytoplasm. The protein resides in the endoplasmic reticulum membrane. The protein localises to the perinuclear region. Interferon-induced dynamin-like GTPase with antiviral activity. The sequence is that of Interferon-induced GTP-binding protein Mx1 (MX1) from Phoca vitulina (Harbor seal).